We begin with the raw amino-acid sequence, 247 residues long: Adenosylcobinamide-GDP ribazoletransferase (247 aa).

6 helical membrane-spanning segments follow: residues 31 to 51 (VVWF…AAAL), 57 to 77 (PWLG…GLHL), 109 to 129 (FGVI…HWLL), 136 to 156 (PALV…TLLL), 189 to 209 (ITPI…WMWL), and 218 to 238 (ILGA…GVSL).

It belongs to the CobS family. It depends on Mg(2+) as a cofactor.

Its subcellular location is the cell inner membrane. It catalyses the reaction alpha-ribazole + adenosylcob(III)inamide-GDP = adenosylcob(III)alamin + GMP + H(+). The enzyme catalyses alpha-ribazole 5'-phosphate + adenosylcob(III)inamide-GDP = adenosylcob(III)alamin 5'-phosphate + GMP + H(+). The protein operates within cofactor biosynthesis; adenosylcobalamin biosynthesis; adenosylcobalamin from cob(II)yrinate a,c-diamide: step 7/7. In terms of biological role, joins adenosylcobinamide-GDP and alpha-ribazole to generate adenosylcobalamin (Ado-cobalamin). Also synthesizes adenosylcobalamin 5'-phosphate from adenosylcobinamide-GDP and alpha-ribazole 5'-phosphate. The sequence is that of Adenosylcobinamide-GDP ribazoletransferase from Thiobacillus denitrificans (strain ATCC 25259 / T1).